The sequence spans 57 residues: MAGNEKSRAKMEQAKGKAKEAAGRAVGNERMTAEGRAAQSKGDARQAKEKGKDVFRH.

Basic and acidic residues-rich tracts occupy residues 1-22 and 42-57; these read MAGN…KEAA and GDAR…VFRH. The interval 1–57 is disordered; that stretch reads MAGNEKSRAKMEQAKGKAKEAAGRAVGNERMTAEGRAAQSKGDARQAKEKGKDVFRH.

It belongs to the UPF0337 (CsbD) family.

The sequence is that of UPF0337 protein SCO0678 from Streptomyces coelicolor (strain ATCC BAA-471 / A3(2) / M145).